Reading from the N-terminus, the 131-residue chain is Translation initiation factor 5A (131 aa).

K36 is modified (hypusine).

This sequence belongs to the eIF-5A family. Post-translationally, the N-terminus is blocked.

It localises to the cytoplasm. In terms of biological role, functions by promoting the formation of the first peptide bond. This is Translation initiation factor 5A (eif5a) from Sulfolobus acidocaldarius (strain ATCC 33909 / DSM 639 / JCM 8929 / NBRC 15157 / NCIMB 11770).